A 329-amino-acid polypeptide reads, in one-letter code: Caveolae-associated protein 4a (329 aa).

Disordered stretches follow at residues 198–260 and 274–329; these read SKEN…NIAK and KERT…IHED. Residues 198–262 adopt a coiled-coil conformation; that stretch reads SKENMNKTRE…RLKENIAKKA (65 aa). A compositionally biased stretch (basic and acidic residues) spans 201–220; it reads NMNKTREKTRENLSKTKESL. Polar residues predominate over residues 221 to 232; that stretch reads SKTGQTLGTKFN. Positions 242 to 260 are enriched in basic and acidic residues; sequence EQREKIKQSSERLKENIAK. The span at 279-290 shows a compositional bias: low complexity; it reads AEGQEGAEAEPA. The residue at position 292 (threonine 292) is a Phosphothreonine. Positions 310–329 are enriched in basic and acidic residues; sequence TENKREGPVSEEGATRIHED.

Belongs to the CAVIN family.

The protein resides in the cytoplasm. It localises to the myofibril. It is found in the sarcomere. The protein localises to the membrane. Its subcellular location is the caveola. Its function is as follows. Induces rhoa activation and activates nppa transcription and myofibrillar organization through the rho/rock signaling pathway. The chain is Caveolae-associated protein 4a (cavin4a) from Danio rerio (Zebrafish).